The following is a 68-amino-acid chain: Protein SlyX homolog (68 aa).

It belongs to the SlyX family.

This Pseudomonas fluorescens (strain ATCC BAA-477 / NRRL B-23932 / Pf-5) protein is Protein SlyX homolog.